The following is a 73-amino-acid chain: Metallothionein-like protein type 2 (73 aa).

Belongs to the metallothionein superfamily. Type 15 family.

Its function is as follows. Metallothioneins have a high content of cysteine residues that bind various heavy metals. In Solanum lycopersicum (Tomato), this protein is Metallothionein-like protein type 2.